The following is a 78-amino-acid chain: Small ribosomal subunit protein eS21 (78 aa).

This sequence belongs to the eukaryotic ribosomal protein eS21 family.

The chain is Small ribosomal subunit protein eS21 (rps21) from Dictyostelium discoideum (Social amoeba).